A 229-amino-acid chain; its full sequence is Uracil-DNA glycosylase (229 aa).

Catalysis depends on D64, which acts as the Proton acceptor.

It belongs to the uracil-DNA glycosylase (UDG) superfamily. UNG family.

Its subcellular location is the cytoplasm. It carries out the reaction Hydrolyzes single-stranded DNA or mismatched double-stranded DNA and polynucleotides, releasing free uracil.. In terms of biological role, excises uracil residues from the DNA which can arise as a result of misincorporation of dUMP residues by DNA polymerase or due to deamination of cytosine. This is Uracil-DNA glycosylase from Salmonella arizonae (strain ATCC BAA-731 / CDC346-86 / RSK2980).